The primary structure comprises 196 residues: Anthranilate synthase component 2 (196 aa).

The Glutamine amidotransferase type-1 domain maps to 4 to 196 (LILIIDNYDS…RDILENFLRM (193 aa)). 60–62 (GPG) contributes to the L-glutamine binding site. The Nucleophile; for GATase activity role is filled by C89. L-glutamine is bound by residues Q93 and 138 to 139 (SL). Residues H177 and E179 each act as for GATase activity in the active site.

In terms of assembly, heterotetramer consisting of two non-identical subunits: a beta subunit (TrpG) and a large alpha subunit (TrpE).

It carries out the reaction chorismate + L-glutamine = anthranilate + pyruvate + L-glutamate + H(+). It functions in the pathway amino-acid biosynthesis; L-tryptophan biosynthesis; L-tryptophan from chorismate: step 1/5. Its function is as follows. Part of a heterotetrameric complex that catalyzes the two-step biosynthesis of anthranilate, an intermediate in the biosynthesis of L-tryptophan. In the first step, the glutamine-binding beta subunit (TrpG) of anthranilate synthase (AS) provides the glutamine amidotransferase activity which generates ammonia as a substrate that, along with chorismate, is used in the second step, catalyzed by the large alpha subunit of AS (TrpE) to produce anthranilate. In the absence of TrpG, TrpE can synthesize anthranilate directly from chorismate and high concentrations of ammonia. The protein is Anthranilate synthase component 2 (trpG) of Methanothermobacter marburgensis (strain ATCC BAA-927 / DSM 2133 / JCM 14651 / NBRC 100331 / OCM 82 / Marburg) (Methanobacterium thermoautotrophicum).